The chain runs to 743 residues: Acetyl-coenzyme A synthetase, chloroplastic/glyoxysomal (743 aa).

The transit peptide at 1–84 (MKIGSPSSPI…LNAVVLGESL (84 aa)) directs the protein to the chloroplast. Residue D613 is part of the active site.

Belongs to the ATP-dependent AMP-binding enzyme family. In terms of tissue distribution, expressed in leaves, flower buds and young flowers.

It is found in the plastid. It localises to the chloroplast. The protein resides in the glyoxysome. It catalyses the reaction acetate + ATP + CoA = acetyl-CoA + AMP + diphosphate. Its function is as follows. Catalyzes the production of acetyl-CoA, an activated form of acetate that can be used for lipid synthesis or for energy generation. May play a limited role in the biosynthesis of lipids. In Arabidopsis thaliana (Mouse-ear cress), this protein is Acetyl-coenzyme A synthetase, chloroplastic/glyoxysomal (ACS).